The sequence spans 180 residues: Endoribonuclease YbeY (180 aa).

Positions 118, 122, and 128 each coordinate Zn(2+).

Belongs to the endoribonuclease YbeY family. It depends on Zn(2+) as a cofactor.

It localises to the cytoplasm. Its function is as follows. Single strand-specific metallo-endoribonuclease involved in late-stage 70S ribosome quality control and in maturation of the 3' terminus of the 16S rRNA. This Rhodococcus erythropolis (strain PR4 / NBRC 100887) protein is Endoribonuclease YbeY.